We begin with the raw amino-acid sequence, 309 residues long: Methionyl-tRNA formyltransferase (309 aa).

A (6S)-5,6,7,8-tetrahydrofolate-binding site is contributed by 112 to 115; the sequence is SLLP.

This sequence belongs to the Fmt family.

It carries out the reaction L-methionyl-tRNA(fMet) + (6R)-10-formyltetrahydrofolate = N-formyl-L-methionyl-tRNA(fMet) + (6S)-5,6,7,8-tetrahydrofolate + H(+). Attaches a formyl group to the free amino group of methionyl-tRNA(fMet). The formyl group appears to play a dual role in the initiator identity of N-formylmethionyl-tRNA by promoting its recognition by IF2 and preventing the misappropriation of this tRNA by the elongation apparatus. In Bartonella bacilliformis (strain ATCC 35685 / KC583 / Herrer 020/F12,63), this protein is Methionyl-tRNA formyltransferase.